We begin with the raw amino-acid sequence, 193 residues long: Ion-translocating oxidoreductase complex subunit A (193 aa).

6 helical membrane-spanning segments follow: residues 5–25 (LLLL…FLGL), 39–59 (VGMG…AYLV), 72–92 (LSTL…EMVI), 102–122 (ILGI…LALL), 134–154 (VVYG…FASL), and 170–190 (IAIG…FTGL).

The protein belongs to the NqrDE/RnfAE family. In terms of assembly, the complex is composed of six subunits: RnfA, RnfB, RnfC, RnfD, RnfE and RnfG.

The protein localises to the cell inner membrane. Its function is as follows. Part of a membrane-bound complex that couples electron transfer with translocation of ions across the membrane. This is Ion-translocating oxidoreductase complex subunit A from Tolumonas auensis (strain DSM 9187 / NBRC 110442 / TA 4).